Reading from the N-terminus, the 281-residue chain is MANLKALLLRIKSVKSIQKTTKVMQMISAAKLHRVQQKLENARKHLLEISNVIDSVDKDNVSDVFSKHKKEKVLLVIMSSDRGLCGNFNNLIVKFTKSYIEDLESDNKEVNLLFFGKKAYDMMYSQYSDKILNVLPDVKSITNFLYFKLFVYSSGVNFEKFDNVIVLFNKFYSTILQKPSAQELIPCNVEMSVLLKEMYQYEPTYIDVISTISLGYILNLMYIAFLENSASEHCSRMIAMESANRNTKDMLNKLALEYNRSRQASITTDLIEIISGFESLN.

The protein belongs to the ATPase gamma chain family. As to quaternary structure, F-type ATPases have 2 components, CF(1) - the catalytic core - and CF(0) - the membrane proton channel. CF(1) has five subunits: alpha(3), beta(3), gamma(1), delta(1), epsilon(1). CF(0) has three main subunits: a, b and c.

It localises to the cell inner membrane. In terms of biological role, produces ATP from ADP in the presence of a proton gradient across the membrane. The gamma chain is believed to be important in regulating ATPase activity and the flow of protons through the CF(0) complex. This is ATP synthase gamma chain from Ehrlichia canis (strain Jake).